We begin with the raw amino-acid sequence, 829 residues long: Protein roadkill (829 aa).

Low complexity-rich tracts occupy residues 24–36 (EQQQ…QQQQ), 122–140 (TPAA…QAAP), and 266–288 (SSSS…SSSS). Disordered stretches follow at residues 24–47 (EQQQ…CCEN), 106–142 (SSLQ…APSV), 266–296 (SSSS…SHHS), and 313–400 (HLNQ…NQQQ). Basic residues predominate over residues 313-322 (HLNQQQHHHP). Low complexity-rich tracts occupy residues 323 to 353 (LSAS…QQQH), 372 to 382 (SSSSSSSSSSS), and 389 to 400 (SSSSSNSNNQQQ). The region spanning 486 to 616 (KFSYMWTINN…EDKLTIFCEV (131 aa)) is the MATH domain. Positions 655–722 (SDVTLSVGGR…IYTGKAPNLE (68 aa)) constitute a BTB domain.

It belongs to the Tdpoz family. As to quaternary structure, interacts with ci and gft/CUL3. In terms of tissue distribution, expressed near the anterio-posterior compartment boundary of antenna, leg and wing disks.

It localises to the nucleus. It participates in protein modification; protein ubiquitination. Its function is as follows. Involved in segment polarity. In complex with gft/CUL3, promotes ubiquitination of ci and its subsequent degradation by the proteasome, which results in hh signaling attenuation. This regulation may be important during eye formation for proper packing of ommatidia into a hexagonal array. The protein is Protein roadkill (rdx) of Drosophila melanogaster (Fruit fly).